A 466-amino-acid chain; its full sequence is Ras-GEF domain-containing family member 1C (466 aa).

Polar residues predominate over residues 1–23 (MPQTLSASDMVTPGSLSPPTTEP). 2 disordered regions span residues 1–35 (MPQTLSASDMVTPGSLSPPTTEPTDGEQAGQPLLD) and 443–466 (SESPENQTEKERWKSLRSSILGKT). In terms of domain architecture, N-terminal Ras-GEF spans 34 to 164 (LDGAPSSASL…LLQALHQKLA (131 aa)). One can recognise a Ras-GEF domain in the interval 200–446 (DPYTLAQQLT…YLASYESESP (247 aa)).

In terms of biological role, guanine nucleotide exchange factor (GEF). The protein is Ras-GEF domain-containing family member 1C (RASGEF1C) of Macaca fascicularis (Crab-eating macaque).